Consider the following 284-residue polypeptide: Pollen allergen Phl p 5b (284 aa).

Positions 1–19 (AAAAVPRRGPRGGPGRSYT) are cleaved as a signal peptide. The tract at residues 1–21 (AAAAVPRRGPRGGPGRSYTAD) is disordered.

The protein belongs to the Poa p IX/Phl p VI allergen family. As to quaternary structure, homodimer; disulfide-linked.

Its function is as follows. Has ribonuclease activity. May be involved in host-pathogen interactions. This Phleum pratense (Common timothy) protein is Pollen allergen Phl p 5b.